A 185-amino-acid chain; its full sequence is Elongation factor P (185 aa).

The protein belongs to the elongation factor P family.

The protein resides in the cytoplasm. The protein operates within protein biosynthesis; polypeptide chain elongation. Functionally, involved in peptide bond synthesis. Stimulates efficient translation and peptide-bond synthesis on native or reconstituted 70S ribosomes in vitro. Probably functions indirectly by altering the affinity of the ribosome for aminoacyl-tRNA, thus increasing their reactivity as acceptors for peptidyl transferase. The chain is Elongation factor P from Burkholderia ambifaria (strain MC40-6).